The sequence spans 282 residues: Aquaporin PIP2-7 (282 aa).

The interval 1–21 (MSKEVSVEGEQPPVKDYTDPP) is disordered. At 1-38 (MSKEVSVEGEQPPVKDYTDPPPEPLLNFGELRLWSFYR) the chain is on the cytoplasmic side. Residues 39 to 59 (ALIAEFVATLLFLYVTIATVI) form a helical membrane-spanning segment. The Extracellular portion of the chain corresponds to 60-71 (GHKEQNAADQCS). A helical transmembrane segment spans residues 72–92 (GVGLLGIAWAFGGMIFILVYC). Residues 93-120 (TAGISGGHINPAVTLGLFLARKVSLIRA) are Cytoplasmic-facing. Residues 102-104 (NPA) carry the NPA 1 motif. Residues 121–141 (LLYMVAQCLGAIVGVGIVKGI) form a helical membrane-spanning segment. At 142-162 (MKHQYNSLGGGANVVAAGYSK) the chain is on the extracellular side. The chain crosses the membrane as a helical span at residues 163–183 (GTALGAEIIGTFVLVYTVFSA). The Cytoplasmic portion of the chain corresponds to 184 to 196 (TDPKRSARDSHVP). A helical transmembrane segment spans residues 197–217 (VLAPLPIGFAVFMVHLATIPI). At 218–244 (TGTGINPARSLGAAVIYNQDKPWDDHW) the chain is on the extracellular side. The NPA 2 motif lies at 223-225 (NPA). Residues 245–265 (ILWVGPFVGALAAAAYHQYIL) form a helical membrane-spanning segment. The Cytoplasmic portion of the chain corresponds to 266 to 282 (RAAAIKALGSFRSNPSN).

It belongs to the MIP/aquaporin (TC 1.A.8) family. PIP (TC 1.A.8.11) subfamily. In terms of tissue distribution, expressed in roots, leaves and fruits.

Its subcellular location is the cell membrane. Its function is as follows. Water channel required to facilitate the transport of water across cell membrane; mercury-insensitive. Contributes to the tolerance to multiple abiotic stresses including salt (NaCl), cold and water deprivation, by modulating cytosolic K(+)/Na(+) ratio, maintaining osmotic balance, and reducing membrane injury (e.g. oxidative injury). Also regulates the expression of abscisic acid (ABA)- biosynthetic and -responsive genes during dehydration and salt stresses. The chain is Aquaporin PIP2-7 from Musa acuminata (Banana).